A 260-amino-acid chain; its full sequence is Cytochrome c oxidase subunit 3 (260 aa).

Transmembrane regions (helical) follow at residues 41 to 61, 81 to 101, 133 to 153, 161 to 181, 196 to 216, and 238 to 258; these read LTLV…RDII, GMIL…WAFF, TGVL…ILAG, ALFL…WEYI, FFVA…FLMV, and AWYW…IYWW.

Belongs to the cytochrome c oxidase subunit 3 family. In terms of assembly, component of the cytochrome c oxidase (complex IV, CIV), a multisubunit enzyme composed of a catalytic core of 3 subunits and several supernumerary subunits. The complex exists as a monomer or a dimer and forms supercomplexes (SCs) in the inner mitochondrial membrane with ubiquinol-cytochrome c oxidoreductase (cytochrome b-c1 complex, complex III, CIII).

The protein resides in the mitochondrion inner membrane. The catalysed reaction is 4 Fe(II)-[cytochrome c] + O2 + 8 H(+)(in) = 4 Fe(III)-[cytochrome c] + 2 H2O + 4 H(+)(out). Functionally, component of the cytochrome c oxidase, the last enzyme in the mitochondrial electron transport chain which drives oxidative phosphorylation. The respiratory chain contains 3 multisubunit complexes succinate dehydrogenase (complex II, CII), ubiquinol-cytochrome c oxidoreductase (cytochrome b-c1 complex, complex III, CIII) and cytochrome c oxidase (complex IV, CIV), that cooperate to transfer electrons derived from NADH and succinate to molecular oxygen, creating an electrochemical gradient over the inner membrane that drives transmembrane transport and the ATP synthase. Cytochrome c oxidase is the component of the respiratory chain that catalyzes the reduction of oxygen to water. Electrons originating from reduced cytochrome c in the intermembrane space (IMS) are transferred via the dinuclear copper A center (CU(A)) of subunit 2 and heme A of subunit 1 to the active site in subunit 1, a binuclear center (BNC) formed by heme A3 and copper B (CU(B)). The BNC reduces molecular oxygen to 2 water molecules using 4 electrons from cytochrome c in the IMS and 4 protons from the mitochondrial matrix. This is Cytochrome c oxidase subunit 3 (COIII) from Strongylocentrotus purpuratus (Purple sea urchin).